A 382-amino-acid chain; its full sequence is MRVSQTSWIVSRMLEYPRGGFFYSTDMACMMEGLAEELAGGHKDEVLIVSGRNGDDEVFKEFPNVRAADGLKGPNSIDPETKLVLIIDVSPTAISNALAATLQEFLIPVWVFCNHTRTLTASVTRRLGYKLWPKGTYTPYICEKAGVSEVVTYNQPESEKFVAFMSAARQIMDKRKSKKTMQELAFLPHLAFAEIAMEGDQEMTPTLTAKKVSDIKDEQVNELASAMFRTGKLSHLDMLSVPDCVYSCGEALKREVAKAKANRERFVVALRNAQYKKYTAGLLEAGTPVKTFTEVIKNWGAYDTIFLPMGVDWTYTGGSNLIRMMMTPGSHKTVTFVPESDDVHEFCHNKPTVNTMGVESAATGLAAELNRRWRRDNPVDAS.

This is an uncharacterized protein from Frog virus 3 (isolate Goorha) (FV-3).